The chain runs to 128 residues: Protein ApaG (128 aa).

The 123-residue stretch at 1–123 (MTSSPDITVS…FRLDIAPESG (123 aa)) folds into the ApaG domain.

The protein is Protein ApaG of Deinococcus radiodurans (strain ATCC 13939 / DSM 20539 / JCM 16871 / CCUG 27074 / LMG 4051 / NBRC 15346 / NCIMB 9279 / VKM B-1422 / R1).